We begin with the raw amino-acid sequence, 395 residues long: [LysW]-aminoadipate semialdehyde transaminase (395 aa).

Residues 113–114 (GT) and Phe140 each bind pyridoxal 5'-phosphate. Residue Arg143 coordinates substrate. 225–228 (DEIQ) contacts pyridoxal 5'-phosphate. Position 254 is an N6-(pyridoxal phosphate)lysine (Lys254). A substrate-binding site is contributed by Thr282. Thr283 is a binding site for pyridoxal 5'-phosphate.

The protein belongs to the class-III pyridoxal-phosphate-dependent aminotransferase family. LysJ subfamily. Homodimer. It depends on pyridoxal 5'-phosphate as a cofactor.

The protein localises to the cytoplasm. It catalyses the reaction [amino-group carrier protein]-C-terminal-gamma-(L-lysyl)-L-glutamate + 2-oxoglutarate = [amino-group carrier protein]-C-terminal-N-(1-carboxy-5-oxopentan-1-yl)-L-glutamine + L-glutamate. The protein operates within amino-acid biosynthesis; L-lysine biosynthesis via AAA pathway; L-lysine from L-alpha-aminoadipate (Thermus route): step 4/5. Catalyzes the transfer of the amino group of L-glutamate to [LysW]-aminoadipate 6-semialdehyde, generating [LysW]-gamma-L-lysine. This chain is [LysW]-aminoadipate semialdehyde transaminase, found in Thermus thermophilus (strain ATCC 27634 / DSM 579 / HB8).